The following is a 195-amino-acid chain: Imidazoleglycerol-phosphate dehydratase (195 aa).

Belongs to the imidazoleglycerol-phosphate dehydratase family.

It localises to the cytoplasm. The enzyme catalyses D-erythro-1-(imidazol-4-yl)glycerol 3-phosphate = 3-(imidazol-4-yl)-2-oxopropyl phosphate + H2O. It functions in the pathway amino-acid biosynthesis; L-histidine biosynthesis; L-histidine from 5-phospho-alpha-D-ribose 1-diphosphate: step 6/9. In Campylobacter curvus (strain 525.92), this protein is Imidazoleglycerol-phosphate dehydratase.